Here is an 860-residue protein sequence, read N- to C-terminus: Beta-glucosidase 1 (860 aa).

Positions 1-19 (MKLSWLEAAALTAASVVSA) are cleaved as a signal peptide. N-linked (GlcNAc...) asparagine glycans are attached at residues asparagine 61, asparagine 211, and asparagine 252. Aspartate 280 is a catalytic residue. Asparagine 315, asparagine 322, asparagine 354, asparagine 387, asparagine 442, asparagine 523, asparagine 542, asparagine 564, asparagine 658, asparagine 668, asparagine 690, and asparagine 712 each carry an N-linked (GlcNAc...) asparagine glycan.

Belongs to the glycosyl hydrolase 3 family.

It catalyses the reaction Hydrolysis of terminal, non-reducing beta-D-glucosyl residues with release of beta-D-glucose.. The protein operates within glycan metabolism; cellulose degradation. The protein is Beta-glucosidase 1 of Aspergillus aculeatus.